A 475-amino-acid chain; its full sequence is 3-isopropylmalate dehydratase large subunit (475 aa).

Positions 352, 412, and 415 each coordinate [4Fe-4S] cluster.

It belongs to the aconitase/IPM isomerase family. LeuC type 1 subfamily. As to quaternary structure, heterodimer of LeuC and LeuD. [4Fe-4S] cluster is required as a cofactor.

It carries out the reaction (2R,3S)-3-isopropylmalate = (2S)-2-isopropylmalate. The protein operates within amino-acid biosynthesis; L-leucine biosynthesis; L-leucine from 3-methyl-2-oxobutanoate: step 2/4. In terms of biological role, catalyzes the isomerization between 2-isopropylmalate and 3-isopropylmalate, via the formation of 2-isopropylmaleate. This chain is 3-isopropylmalate dehydratase large subunit, found in Gluconobacter oxydans (strain 621H) (Gluconobacter suboxydans).